The sequence spans 186 residues: Potassium-transporting ATPase KdpC subunit (186 aa).

Residues 10-30 (LTIITMVLCGFLFPLAITLIG) traverse the membrane as a helical segment.

The protein belongs to the KdpC family. As to quaternary structure, the system is composed of three essential subunits: KdpA, KdpB and KdpC.

It is found in the cell membrane. Its function is as follows. Part of the high-affinity ATP-driven potassium transport (or Kdp) system, which catalyzes the hydrolysis of ATP coupled with the electrogenic transport of potassium into the cytoplasm. This subunit acts as a catalytic chaperone that increases the ATP-binding affinity of the ATP-hydrolyzing subunit KdpB by the formation of a transient KdpB/KdpC/ATP ternary complex. The chain is Potassium-transporting ATPase KdpC subunit from Staphylococcus aureus (strain COL).